The sequence spans 289 residues: Acetyl-coenzyme A carboxylase carboxyl transferase subunit beta 2 (289 aa).

Residues 25–289 (VWTKCPSCEQ…TNKSIQPEAE (265 aa)) enclose the CoA carboxyltransferase N-terminal domain. Residues Cys29, Cys32, Cys48, and Cys51 each contribute to the Zn(2+) site. Residues 29 to 51 (CPSCEQVLYRIALKENLEVCPKC) form a C4-type zinc finger.

The protein belongs to the AccD/PCCB family. In terms of assembly, acetyl-CoA carboxylase is a heterohexamer composed of biotin carboxyl carrier protein (AccB), biotin carboxylase (AccC) and two subunits each of ACCase subunit alpha (AccA) and ACCase subunit beta (AccD). The cofactor is Zn(2+).

Its subcellular location is the cytoplasm. The enzyme catalyses N(6)-carboxybiotinyl-L-lysyl-[protein] + acetyl-CoA = N(6)-biotinyl-L-lysyl-[protein] + malonyl-CoA. Its pathway is lipid metabolism; malonyl-CoA biosynthesis; malonyl-CoA from acetyl-CoA: step 1/1. Its function is as follows. Component of the acetyl coenzyme A carboxylase (ACC) complex. Biotin carboxylase (BC) catalyzes the carboxylation of biotin on its carrier protein (BCCP) and then the CO(2) group is transferred by the transcarboxylase to acetyl-CoA to form malonyl-CoA. The polypeptide is Acetyl-coenzyme A carboxylase carboxyl transferase subunit beta 2 (Vibrio campbellii (strain ATCC BAA-1116)).